The primary structure comprises 86 residues: Late effector protein 1 (86 aa).

Positions 1–24 (MRSHQMAAFFAVSLMMMVVLGALS) are cleaved as a signal peptide.

Belongs to the lep1 family. In terms of assembly, interacts at the cell wall with secreted rep1 repellent peptides.

Its subcellular location is the secreted. It localises to the cell wall. Its function is as follows. Core effector contributing to spore formation and tumor formation at the host plant. Modulates surface hydrophobicity promoting cell-cell or cell-surface contacts. Lep1 and rep1 interact in aerial hyphae to form a strong hydrophobic layer. Plays a crucial role in hyphal aggregation that might be a prerequisite for strong proliferation of diploid cells and for induction of the morphological changes associated with spore formation. The polypeptide is Late effector protein 1 (Mycosarcoma maydis (Corn smut fungus)).